The chain runs to 209 residues: Ribonuclease HII (209 aa).

The region spanning 7-198 is the RNase H type-2 domain; that stretch reads GPVAGVDEAG…VAKAHQEWLH (192 aa). A divalent metal cation-binding residues include aspartate 13, glutamate 14, and aspartate 107.

The protein belongs to the RNase HII family. Mn(2+) is required as a cofactor. Mg(2+) serves as cofactor.

Its subcellular location is the cytoplasm. It catalyses the reaction Endonucleolytic cleavage to 5'-phosphomonoester.. In terms of biological role, endonuclease that specifically degrades the RNA of RNA-DNA hybrids. This chain is Ribonuclease HII, found in Corynebacterium glutamicum (strain ATCC 13032 / DSM 20300 / JCM 1318 / BCRC 11384 / CCUG 27702 / LMG 3730 / NBRC 12168 / NCIMB 10025 / NRRL B-2784 / 534).